A 429-amino-acid polypeptide reads, in one-letter code: MPYITDVYAREVLDSRGNPTIEVEIFTESGAFGSAIVPSGASTGEYEAVELRDGDKDRYLGKGVQKAVENVNDLIAPELIGIDVTRQNIIDALMIDLDGTENKGKLGANAILGVSMAAAHAAANYLEVPLYNYLGGFNAKTLPTPMMNILNGGEHADNNVDIQEFMIMPVGAPTFKEALRTGAEIFHALKKVLTSKGYNTAVGDEGGFAPNLGSNEEALQTIVEAIEAAGYKPGEEVKLAMDVAASEIYSDGKYNLKGEGVVRSSEEMVDWYEEMISKYPIISIEDGLDENDWDGFKILTDRLGDKVQLVGDDLFVTNTNKLSKGIDQGIGNSILIKVNQIGTLTETFEAIEMAKRAGYTAVISHRSGETEDVTIADIAVATNAGQIKTGAPSRTDRVAKYNQLLRIEDELAGMGEYGGLASFYNLANK.

Gln-163 contacts (2R)-2-phosphoglycerate. The active-site Proton donor is Glu-205. The Mg(2+) site is built by Asp-242, Glu-285, and Asp-312. 4 residues coordinate (2R)-2-phosphoglycerate: Lys-337, Arg-366, Ser-367, and Lys-388. The active-site Proton acceptor is Lys-337.

Belongs to the enolase family. It depends on Mg(2+) as a cofactor.

It is found in the cytoplasm. The protein localises to the secreted. Its subcellular location is the cell surface. It carries out the reaction (2R)-2-phosphoglycerate = phosphoenolpyruvate + H2O. It participates in carbohydrate degradation; glycolysis; pyruvate from D-glyceraldehyde 3-phosphate: step 4/5. Functionally, catalyzes the reversible conversion of 2-phosphoglycerate (2-PG) into phosphoenolpyruvate (PEP). It is essential for the degradation of carbohydrates via glycolysis. This Oceanobacillus iheyensis (strain DSM 14371 / CIP 107618 / JCM 11309 / KCTC 3954 / HTE831) protein is Enolase.